Reading from the N-terminus, the 360-residue chain is G-protein coupled receptor 15 (360 aa).

Residues Met-1–Ser-33 lie on the Extracellular side of the membrane. The helical transmembrane segment at Val-34–Leu-54 threads the bilayer. Topologically, residues Met-55–Asp-69 are cytoplasmic. The chain crosses the membrane as a helical span at residues Ile-70–Val-90. At Asp-91–Ser-120 the chain is on the extracellular side. Residues Val-121–Ser-141 traverse the membrane as a helical segment. At Arg-142–Cys-149 the chain is on the cytoplasmic side. Residues Ala-150–Leu-170 traverse the membrane as a helical segment. Over Ser-171–Lys-192 the chain is Extracellular. The helical transmembrane segment at Leu-193–Thr-213 threads the bilayer. At Cys-214–Ser-239 the chain is on the cytoplasmic side. Residues Ile-240–Ser-260 traverse the membrane as a helical segment. At Lys-261–Met-284 the chain is on the extracellular side. The helical transmembrane segment at Glu-285–Phe-305 threads the bilayer. The Cytoplasmic portion of the chain corresponds to Asp-306 to Leu-360. Residue Ser-359 is modified to Phosphoserine.

Belongs to the G-protein coupled receptor 1 family. In terms of assembly, interacts with adapter YWHAE; this interaction promotes ER-to-Golgi transport of GPR15. Post-translationally, phosphorylation is necessary for YWHAE binding and efficient surface expression. In terms of processing, O-glycosylated. Sialylated O-glycans in the N-terminal tail inhibits binding of GPR15LG. Sulfation is required for efficient binding of GPR15LG.

The protein localises to the cell membrane. Its function is as follows. G protein-coupled receptor that plays an important role in immune homeostasis. Acts via its natural ligand GPR15LG, a chemokine-like polypeptide strongly expressed in gastrointestinal tissues. GPR15-GPR15LG signaling axis regulates intestinal homeostasis and inflammation through the migration of immune cells. Controls thereby the specific homing of T-cells, particularly FOXP3+ regulatory T-cells (Tregs), to the large intestine lamina propria. Also required for skin localization of thymus-derived dendritic epidermal T-cells. Plays an important role in mediating cytoprotective function as well as angiogenesis of thrombomodulin. Mechanistically, preferentially signals through the Gi/o pathway to inhibit adenylate cyclase activity and activate a phosphatidylinositol-calcium second messenger system that regulates the release of Ca(2+) ions from intracellular stores. This Macaca nemestrina (Pig-tailed macaque) protein is G-protein coupled receptor 15 (GPR15).